We begin with the raw amino-acid sequence, 427 residues long: Serine--tRNA ligase (427 aa).

231–233 (TAE) contacts L-serine. Position 262–264 (262–264 (RSE)) interacts with ATP. E285 is a binding site for L-serine. 349–352 (EISS) serves as a coordination point for ATP. S385 lines the L-serine pocket.

Belongs to the class-II aminoacyl-tRNA synthetase family. Type-1 seryl-tRNA synthetase subfamily. In terms of assembly, homodimer. The tRNA molecule binds across the dimer.

The protein localises to the cytoplasm. The catalysed reaction is tRNA(Ser) + L-serine + ATP = L-seryl-tRNA(Ser) + AMP + diphosphate + H(+). The enzyme catalyses tRNA(Sec) + L-serine + ATP = L-seryl-tRNA(Sec) + AMP + diphosphate + H(+). The protein operates within aminoacyl-tRNA biosynthesis; selenocysteinyl-tRNA(Sec) biosynthesis; L-seryl-tRNA(Sec) from L-serine and tRNA(Sec): step 1/1. Functionally, catalyzes the attachment of serine to tRNA(Ser). Is also able to aminoacylate tRNA(Sec) with serine, to form the misacylated tRNA L-seryl-tRNA(Sec), which will be further converted into selenocysteinyl-tRNA(Sec). The polypeptide is Serine--tRNA ligase (Rhizobium leguminosarum bv. trifolii (strain WSM2304)).